Reading from the N-terminus, the 96-residue chain is DNA/RNA-binding protein Alba (96 aa).

The protein belongs to the histone-like Alba family.

It is found in the cytoplasm. It localises to the chromosome. In terms of biological role, binds double-stranded DNA tightly but without sequence specificity. Involved in DNA compaction. The chain is DNA/RNA-binding protein Alba from Methanocella arvoryzae (strain DSM 22066 / NBRC 105507 / MRE50).